The sequence spans 382 residues: GDP-mannose-dependent alpha-(1-6)-phosphatidylinositol monomannoside mannosyltransferase (382 aa).

Positions 200, 205, 257, and 294 each coordinate GDP-alpha-D-mannose.

It belongs to the glycosyltransferase group 1 family. Glycosyltransferase 4 subfamily.

The catalysed reaction is a 1,2-diacyl-sn-glycero-3-phospho-[alpha-D-mannopyranosyl-(1&lt;-&gt;6)-D-myo-inositol] + GDP-alpha-D-mannose = a 2,6-O-bis(alpha-D-mannopyranosyl)-1-phosphatidyl-1D-myo-inositol + GDP + H(+). It carries out the reaction a 1,2-diacyl-sn-glycero-3-phospho-[alpha-D-6-acyl-mannopyranosyl-(1&lt;-&gt;6)-D-myo-inositol] + GDP-alpha-D-mannose = a 2-O-(alpha-D-mannosyl)-6-O-(6-O-acyl-alpha-D-mannosyl)-1-phosphatidyl-1D-myo-inositol + GDP + H(+). Its pathway is phospholipid metabolism; phosphatidylinositol metabolism. Its function is as follows. Involved in the biosynthesis of phosphatidyl-myo-inositol mannosides (PIM) which are early precursors in the biosynthesis of lipomannans (LM) and lipoarabinomannans (LAM). Catalyzes the addition of a mannosyl residue from GDP-D-mannose (GDP-Man) to the position 6 of a phosphatidyl-myo-inositol bearing an alpha-1,2-linked mannose residue (PIM1) to generate phosphatidyl-myo-inositol bearing alpha-1,2- and alpha-1,6-linked mannose residues (Ac1PIM2). PimB also catalyzes the addition of a mannosyl residue from GDP-Man to the position 6 of phosphatidyl-myo-inositol bearing an acylated alpha-1,2-linked mannose residue (Ac1PIM1) to generate monoacylated phosphatidyl-myo-inositol bearing alpha-1,2- and alpha-1,6-linked mannose residues (Ac1PIM2). The addition of the second mannosyl residue by PimB preferentially occurs before the acylation of the mannosyl residue transferred by PimA. Also able to transfer a mannosyl residue from GDP-Man to the position 6 of a phosphatidyl-myo-inositol (PI), but this reaction is very slow. This is GDP-mannose-dependent alpha-(1-6)-phosphatidylinositol monomannoside mannosyltransferase from Mycolicibacterium smegmatis (strain ATCC 700084 / mc(2)155) (Mycobacterium smegmatis).